The primary structure comprises 408 residues: CinA-like protein (408 aa).

Belongs to the CinA family.

This chain is CinA-like protein, found in Thermotoga sp. (strain RQ2).